A 229-amino-acid chain; its full sequence is AA9 family lytic polysaccharide monooxygenase E (229 aa).

Residues 1 to 19 (MRSSDITFVLLSVVATVRS) form the signal peptide. H20 serves as a coordination point for Cu(2+). The cysteines at positions 57 and 178 are disulfide-linked. An N-linked (GlcNAc...) asparagine glycan is attached at N76. Position 99 (H99) interacts with Cu(2+). Positions 164 and 173 each coordinate O2. Residue Y175 participates in Cu(2+) binding. N-linked (GlcNAc...) asparagine glycosylation occurs at N217.

This sequence belongs to the polysaccharide monooxygenase AA9 family. Cu(2+) is required as a cofactor.

The protein resides in the secreted. The enzyme catalyses [(1-&gt;4)-beta-D-glucosyl]n+m + reduced acceptor + O2 = 4-dehydro-beta-D-glucosyl-[(1-&gt;4)-beta-D-glucosyl]n-1 + [(1-&gt;4)-beta-D-glucosyl]m + acceptor + H2O.. Its function is as follows. Lytic polysaccharide monooxygenase (LPMO) that depolymerizes crystalline and amorphous polysaccharides via the oxidation of scissile alpha- or beta-(1-4)-glycosidic bonds, yielding C1 and C4 oxidation products. Catalysis by LPMOs requires the reduction of the active-site copper from Cu(II) to Cu(I) by a reducing agent and H(2)O(2) or O(2) as a cosubstrate. The sequence is that of AA9 family lytic polysaccharide monooxygenase E from Botryotinia fuckeliana (strain B05.10) (Noble rot fungus).